A 418-amino-acid chain; its full sequence is Transmembrane protease serine 11D (418 aa).

Residues 1-20 (MYRPARVTSTSRFLNPYVVC) lie on the Cytoplasmic side of the membrane. The chain crosses the membrane as a helical; Signal-anchor for type II membrane protein span at residues 21–41 (FIVVAGVVILAVTIALLVYFL). The Extracellular segment spans residues 42-418 (AFDQKSYFYR…LDWIRQQTGI (377 aa)). The SEA domain maps to 46-163 (KSYFYRSSFQ…STEITSLTDQ (118 aa)). A glycan (N-linked (GlcNAc...) asparagine) is linked at Asn144. Cystine bridges form between Cys173–Cys292, Cys212–Cys228, Cys337–Cys353, and Cys364–Cys393. A Peptidase S1 domain is found at 187–417 (ILGGTEAEEG…YLDWIRQQTG (231 aa)). Active-site charge relay system residues include His227 and Asp272. Ser368 (charge relay system) is an active-site residue.

This sequence belongs to the peptidase S1 family. As to quaternary structure, monomer. In terms of tissue distribution, located in the cells of the submucosal serous glands of the bronchi and trachea.

Its subcellular location is the cell membrane. It localises to the secreted. Strongly inhibited by diisopropyl fluorophosphate, leupeptin, antipain, aprotinin, and soybean trypsin inhibitor, but hardly inhibited by secretory leukocyte protease inhibitor at 10 microM. May play some biological role in the host defense system on the mucous membrane independently of or in cooperation with other substances in airway mucous or bronchial secretions. Plays a role in the proteolytic processing of ACE2. Proteolytically cleaves and activates the human coronavirus 229E (HCoV-229E) spike glycoprotein which facilitate virus-cell membrane fusions; spike proteins are synthesized and maintained in precursor intermediate folding states and proteolysis permits the refolding and energy release required to create stable virus-cell linkages and membrane coalescence. Preferentially cleaves the C-terminal side of arginine residues at the P1 position of certain peptides, cleaving Boc-Phe-Ser-Arg-4-methylcoumaryl-7-amide most efficiently and having an optimum pH of 8.6 with this substrate. The protein is Transmembrane protease serine 11D (TMPRSS11D) of Homo sapiens (Human).